Reading from the N-terminus, the 436-residue chain is MGQVLPLVTRQGDRIAIVSGLRTPFARQATAFHGIPAVDLGKMVVGELLARSEIPAEVIEQLVFGQVVQMPEAPNIAREIVLGTGMNVHTDAYSVSRACATSFQAVANVAESLMAGTIRAGIAGGADSSSVLPIGVSKKLARVLVDVNKARTMSQRLKLFSRLRLRDLMPVPPAVAEYSTGLRMGDTAEQMAKTYGITREQQDALAHRSHQRAAQAWSDGKLKEEVMTAFIPPYKQPLVEDNNIRGNSSLADYAKLRPAFDRKHGTVTAANSTPLTDGAAAVILMTESRAKELGLVPLGYLRSYAFTAIDVWQDMLFGPAWSTPLALERAGLTMSDLTLIDMHEAFAAQTLANIQLLGSERFACEVLGRAHATGEVDDSKFNVLGGSIAYGHPFAATGAWMITQTLHELRRRGGGFGLVTACAAGGLGAAMVLEAE.

Cys-99 (acyl-thioester intermediate) is an active-site residue. Active-site proton acceptor residues include His-392 and Cys-422.

Belongs to the thiolase-like superfamily. Thiolase family. In terms of assembly, heterotetramer of two alpha chains (FadJ) and two beta chains (FadI).

It localises to the cytoplasm. The catalysed reaction is an acyl-CoA + acetyl-CoA = a 3-oxoacyl-CoA + CoA. The protein operates within lipid metabolism; fatty acid beta-oxidation. In terms of biological role, catalyzes the final step of fatty acid oxidation in which acetyl-CoA is released and the CoA ester of a fatty acid two carbons shorter is formed. The chain is 3-ketoacyl-CoA thiolase from Shigella boydii serotype 4 (strain Sb227).